The following is a 1398-amino-acid chain: DNA topoisomerase 2 (1398 aa).

ATP is bound by residues Asn-69, Asn-103, 131–133 (SDN), and 144–151 (GRNGFGAK). Residues 260-317 (NSNDNKNNKGQNDNNNNNNNNNDENANQNNDNLDVSLSNEPADGTPTKNNNNNNNNND) form a disordered region. The span at 267 to 291 (NKGQNDNNNNNNNNNDENANQNNDN) shows a compositional bias: low complexity. Residue 411–413 (QTK) coordinates ATP. Positions 493–608 (CTLILTEGDS…SLLKHKGFLS (116 aa)) constitute a Toprim domain. Mg(2+) contacts are provided by Glu-499, Asp-577, and Asp-579. A Topo IIA-type catalytic domain is found at 739–1191 (IPNIMDGWKP…TVETMWLKDI (453 aa)). Catalysis depends on Tyr-830, which acts as the O-(5'-phospho-DNA)-tyrosine intermediate. The interval 1012–1021 (KLKSTLTTTN) is interaction with DNA. Disordered regions lie at residues 1214 to 1250 (KFKV…SDSS) and 1262 to 1361 (NTNK…NSSI). Low complexity predominate over residues 1262 to 1276 (NTNKKTTTSSNNVNN). 2 stretches are compositionally biased toward polar residues: residues 1287 to 1300 (LNSN…SVSK) and 1348 to 1357 (DSTNDNNSEL).

This sequence belongs to the type II topoisomerase family. Homodimer. The cofactor is Mg(2+). Mn(2+) serves as cofactor. Ca(2+) is required as a cofactor.

The protein localises to the nucleus. The catalysed reaction is ATP-dependent breakage, passage and rejoining of double-stranded DNA.. Control of topological states of DNA by transient breakage and subsequent rejoining of DNA strands. Topoisomerase II makes double-strand breaks. The polypeptide is DNA topoisomerase 2 (TOP2) (Plasmodium falciparum (isolate K1 / Thailand)).